Consider the following 576-residue polypeptide: Low-affinity glucose transporter HXT4 (576 aa).

The interval 1-56 (MSEEAAYQEDTAVQNTPADALSPVESDSNSALSTPSNKAERDDMKDFDENHEESNN) is disordered. Over 1–66 (MSEEAAYQED…YVEIPKKPAS (66 aa)) the chain is Cytoplasmic. Over residues 25–37 (ESDSNSALSTPSN) the composition is skewed to polar residues. The segment covering 38 to 54 (KAERDDMKDFDENHEES) has biased composition (basic and acidic residues). Residue K45 forms a Glycyl lysine isopeptide (Lys-Gly) (interchain with G-Cter in ubiquitin) linkage. The chain crosses the membrane as a helical span at residues 67 to 87 (AYVTVSICCLMVAFGGFVFGW). Residues 88 to 122 (DTGTISGFVAQTDFIRRFGMKHHDGTYYLSKVRTG) are Extracellular-facing. The helical transmembrane segment at 123–143 (LIVSIFNIGCAIGGIILAKLG) threads the bilayer. At 144–149 (DMYGRK) the chain is on the cytoplasmic side. The helical transmembrane segment at 150 to 170 (MGLIVVVVIYIIGIIIQIASI) threads the bilayer. Residues 171–180 (NKWYQYFIGR) lie on the Extracellular side of the membrane. The helical transmembrane segment at 181-201 (IISGLGVGGIAVLSPMLISEV) threads the bilayer. Residues 202–207 (SPKHIR) lie on the Cytoplasmic side of the membrane. The chain crosses the membrane as a helical span at residues 208–228 (GTLVSCYQLMITLGIFLGYCT). Topologically, residues 229 to 242 (NYGTKTYTNSVQWR) are extracellular. The chain crosses the membrane as a helical span at residues 243–263 (VPLGLGFAWALFMIGGMTFVP). The Cytoplasmic segment spans residues 264–346 (ESPRYLVEVG…IQSLQQLTGD (83 aa)). Residues 347-363 (NYFFYYGTTVFTAVGLE) traverse the membrane as a helical segment. Over 364–369 (DSFETS) the chain is Extracellular. The helical transmembrane segment at 370 to 387 (IVLGIVNFASTFVGIFLV) threads the bilayer. Residues 388–394 (ERYGRRR) are Cytoplasmic-facing. A helical membrane pass occupies residues 395-415 (CLLWGAASMTACMVVFASVGV). Over 416 to 437 (TRLWPNGKKNGSSKGAGNCMIV) the chain is Extracellular. Residue N425 is glycosylated (N-linked (GlcNAc...) asparagine). Residues 438-458 (FTCFYLFCFATTWAPIPFVVN) traverse the membrane as a helical segment. The Cytoplasmic portion of the chain corresponds to 459–475 (SETFPLRVKSKCMAIAQ). Residues 476 to 496 (ACNWIWGFLIGFFTPFISGAI) traverse the membrane as a helical segment. A topological domain (extracellular) is located at residue D497. The chain crosses the membrane as a helical span at residues 498-518 (FYYGYVFMGCLVFSYFYVFFF). Over 519–576 (VPETKGLTLEEVNTLWEEGVLPWKSPSWVPPNKRGTDYNADDLMHDDQPFYKKMFGKK) the chain is Cytoplasmic.

Belongs to the major facilitator superfamily. Sugar transporter (TC 2.A.1.1) family.

Its subcellular location is the cell membrane. Xylose uptake is strongly inhibited by glucose. Low-affinity glucose transporter. Can also transport xylose. This is Low-affinity glucose transporter HXT4 (HXT4) from Saccharomyces cerevisiae (strain ATCC 204508 / S288c) (Baker's yeast).